The primary structure comprises 889 residues: F-BAR domain only protein 1 (889 aa).

The F-BAR domain occupies 1-248 (MSYFGEHFWG…NIENVSVEML (248 aa)). Positions 1–275 (MSYFGEHFWG…LDFEAYSAAA (275 aa)) are mediates membrane-binding. Positions 156–195 (TSQKEMDKAETKTKKAAESLRRSVEKYNSARADFEQKMLD) form a coiled coil. A mediates interaction with the adaptor protein complex AP-2 region spans residues 267 to 442 (DFEAYSAAAL…KNLFGPPLES (176 aa)). The tract at residues 294–352 (LSRREREPEPPAAVDFLEPDSGTCPEVDEEGFTVRPDVTQNSTAEPSRFSSSDSDFDDE) is disordered. Phosphoserine is present on residues S295, S347, and S372. Positions 382–596 (ATAGSLILPP…SPLGSSAAST (215 aa)) are disordered. The segment covering 450–469 (TGSSSLGFTSSPSPFSSSSP) has biased composition (low complexity). A compositionally biased stretch (pro residues) spans 496–511 (PGTPQSPPSCRAPPPE). The residue at position 530 (S530) is a Phosphoserine. Positions 580-596 (LSRSLSPSPLGSSAAST) are enriched in low complexity. Residues 609–889 (HGVSRGPSPV…FATGMYLVSC (281 aa)) are mediates interaction with AGFG1, CALM, DAB2, EPS15, EPS15R, ITSN1 and clathrin. Position 616 is a phosphoserine (S616). The region spanning 625 to 888 (ALPIATAFTE…RFATGMYLVS (264 aa)) is the MHD domain. The tract at residues 826 to 849 (AGGSGRLSASWEPLSGPSTPSPVA) is disordered.

The protein belongs to the FCHO family. As to quaternary structure, may oligomerize and form homotetramer. Interacts with AP2A2 and AP2B1; 2 subunits of the adaptor protein complex AP-2. Interacts with DAB2. Interacts with clathrin (CLTC or CLTCL1). Interacts with EPS15, EPS15R and ITSN1. Interacts with AGFG1 and CALM. May interact with ACVR1; linking this receptor to clathrin-mediated endocytosis. Predominantly expressed in lymphoid cells.

It is found in the membrane. Its subcellular location is the clathrin-coated pit. Functionally, functions in an early step of clathrin-mediated endocytosis. Has both a membrane binding/bending activity and the ability to recruit proteins essential to the formation of functional clathrin-coated pits. May regulate Bmp signaling by regulating clathrin-mediated endocytosis of Bmp receptors. Involved in the regulation of T-cell poliferation and activation. Affects TCR clustering upon receptor triggering and modulates its internalisation, playing a role in TCR-dependent T-cell activation. This chain is F-BAR domain only protein 1, found in Homo sapiens (Human).